We begin with the raw amino-acid sequence, 79 residues long: Translational regulator CsrA (79 aa).

Belongs to the CsrA/RsmA family. Homodimer; the beta-strands of each monomer intercalate to form a hydrophobic core, while the alpha-helices form wings that extend away from the core.

It localises to the cytoplasm. In terms of biological role, a translational regulator that binds mRNA to regulate translation initiation and/or mRNA stability. Usually binds in the 5'-UTR at or near the Shine-Dalgarno sequence preventing ribosome-binding, thus repressing translation. Its main target seems to be the major flagellin gene, while its function is anatagonized by FliW. The sequence is that of Translational regulator CsrA from Syntrophus aciditrophicus (strain SB).